The following is a 127-amino-acid chain: Small ribosomal subunit protein uS12 (127 aa).

D89 carries the post-translational modification 3-methylthioaspartic acid. The segment at 102–127 is disordered; it reads LDTAGVKDRKQGRSKYGTKRPKEAKK. Over residues 113–127 the composition is skewed to basic residues; that stretch reads GRSKYGTKRPKEAKK.

It belongs to the universal ribosomal protein uS12 family. In terms of assembly, part of the 30S ribosomal subunit. Contacts proteins S8 and S17. May interact with IF1 in the 30S initiation complex.

Functionally, with S4 and S5 plays an important role in translational accuracy. Its function is as follows. Interacts with and stabilizes bases of the 16S rRNA that are involved in tRNA selection in the A site and with the mRNA backbone. Located at the interface of the 30S and 50S subunits, it traverses the body of the 30S subunit contacting proteins on the other side and probably holding the rRNA structure together. The combined cluster of proteins S8, S12 and S17 appears to hold together the shoulder and platform of the 30S subunit. The chain is Small ribosomal subunit protein uS12 from Nostoc punctiforme (strain ATCC 29133 / PCC 73102).